The sequence spans 475 residues: UDP-N-acetylmuramate--L-alanine ligase (475 aa).

125-131 lines the ATP pocket; the sequence is GTHGKTT.

Belongs to the MurCDEF family.

It is found in the cytoplasm. The enzyme catalyses UDP-N-acetyl-alpha-D-muramate + L-alanine + ATP = UDP-N-acetyl-alpha-D-muramoyl-L-alanine + ADP + phosphate + H(+). Its pathway is cell wall biogenesis; peptidoglycan biosynthesis. Cell wall formation. This is UDP-N-acetylmuramate--L-alanine ligase from Haemophilus influenzae (strain 86-028NP).